The following is a 149-amino-acid chain: Nucleoside diphosphate kinase (149 aa).

Positions 9, 57, 85, 91, 102, and 112 each coordinate ATP. Histidine 115 serves as the catalytic Pros-phosphohistidine intermediate.

This sequence belongs to the NDK family. As to quaternary structure, homotetramer. Requires Mg(2+) as cofactor.

Its subcellular location is the cytoplasm. It catalyses the reaction a 2'-deoxyribonucleoside 5'-diphosphate + ATP = a 2'-deoxyribonucleoside 5'-triphosphate + ADP. The catalysed reaction is a ribonucleoside 5'-diphosphate + ATP = a ribonucleoside 5'-triphosphate + ADP. Functionally, major role in the synthesis of nucleoside triphosphates other than ATP. The ATP gamma phosphate is transferred to the NDP beta phosphate via a ping-pong mechanism, using a phosphorylated active-site intermediate. The polypeptide is Nucleoside diphosphate kinase (Desulfitobacterium hafniense (strain Y51)).